Reading from the N-terminus, the 379-residue chain is Protein FAM53B (379 aa).

Disordered regions lie at residues 206-257 and 302-348; these read CPAE…HKQR and AQND…AGKE. A compositionally biased stretch (polar residues) spans 212-236; it reads SPESTPELQRRSGQSGLARSRSQPC. The segment covering 239–249 has biased composition (basic residues); sequence NHQKIGVKRRR. The Nuclear localization signal signature appears at 246–249; sequence KRRR. Over residues 326–342 the composition is skewed to polar residues; sequence QSDSSSADALIHQSESS.

Belongs to the FAM53 family. Interacts with ctnnb1. In terms of tissue distribution, mainly expressed in proliferating tissues.

It localises to the nucleus. Functionally, acts as a regulator of Wnt signaling pathway by regulating beta-catenin (ctnnb1) nuclear localization. Required for appendage regeneration by regulating cell proliferation. The chain is Protein FAM53B from Danio rerio (Zebrafish).